A 794-amino-acid chain; its full sequence is Zinc finger protein 148 (794 aa).

Lysine 6 is covalently cross-linked (Glycyl lysine isopeptide (Lys-Gly) (interchain with G-Cter in SUMO2)). Serine 51 bears the Phosphoserine mark. Residues lysine 88, lysine 115, and lysine 132 each participate in a glycyl lysine isopeptide (Lys-Gly) (interchain with G-Cter in SUMO2) cross-link. A C2H2-type 1 zinc finger spans residues 171-193 (HVCEHCNAAFRTNYHLQRHVFIH). Threonine 194 bears the Phosphothreonine mark. 2 C2H2-type zinc fingers span residues 199–221 (FQCS…EKIH) and 227–249 (FRCD…KRTH). At serine 250 the chain carries Phosphoserine. The segment at 255–278 (YQCEYCLQYFSRTDRVLKHKRMCH) adopts a C2H2-type 4 zinc-finger fold. Residue lysine 291 forms a Glycyl lysine isopeptide (Lys-Gly) (interchain with G-Cter in SUMO2) linkage. Residues 298-346 (EEDSGFSTSPKDNSLPKKKRQKPEKKSSGMDKESVLDKSDTKKDRNDYL) are disordered. Serine 301 and serine 306 each carry phosphoserine. Residue lysine 308 forms a Glycyl lysine isopeptide (Lys-Gly) (interchain with G-Cter in SUMO2) linkage. Over residues 321-344 (EKKSSGMDKESVLDKSDTKKDRND) the composition is skewed to basic and acidic residues. Lysine 356 participates in a covalent cross-link: Glycyl lysine isopeptide (Lys-Gly) (interchain with G-Cter in SUMO1); alternate. A Glycyl lysine isopeptide (Lys-Gly) (interchain with G-Cter in SUMO2); alternate cross-link involves residue lysine 356. A Glycyl lysine isopeptide (Lys-Gly) (interchain with G-Cter in SUMO2) cross-link involves residue lysine 402. The residue at position 412 (serine 412) is a Phosphoserine. Glycyl lysine isopeptide (Lys-Gly) (interchain with G-Cter in SUMO2) cross-links involve residues lysine 421 and lysine 424. Positions 574 to 588 (NSSDVPEVTQSENVG) are enriched in polar residues. The disordered stretch occupies residues 574 to 596 (NSSDVPEVTQSENVGSSSQASSS). Lysine 607 bears the N6-acetyllysine mark. A phosphoserine mark is found at serine 665 and serine 784.

The protein belongs to the krueppel C2H2-type zinc-finger protein family. In terms of assembly, interacts with HNRNPDL. Interacts with the 5FMC complex; the interaction requires association with CHTOP. Interacts with CAVIN1. Sumoylated with SUMO2. Desumoylated by SENP3, resulting in the stimulation of transcription of its target genes. As to expression, expressed in heart, lung, kidney, skeletal muscle, liver, brain and spleen.

Its subcellular location is the nucleus. Involved in transcriptional regulation. Represses the transcription of a number of genes including gastrin, stromelysin and enolase. Binds to the G-rich box in the enhancer region of these genes. The chain is Zinc finger protein 148 (Znf148) from Rattus norvegicus (Rat).